A 468-amino-acid polypeptide reads, in one-letter code: Argininosuccinate lyase (468 aa).

This sequence belongs to the lyase 1 family. Argininosuccinate lyase subfamily.

It localises to the cytoplasm. The enzyme catalyses 2-(N(omega)-L-arginino)succinate = fumarate + L-arginine. Its pathway is amino-acid biosynthesis; L-arginine biosynthesis; L-arginine from L-ornithine and carbamoyl phosphate: step 3/3. The sequence is that of Argininosuccinate lyase from Zymomonas mobilis subsp. mobilis (strain ATCC 31821 / ZM4 / CP4).